We begin with the raw amino-acid sequence, 292 residues long: 33 kDa chaperonin (292 aa).

Disulfide bonds link C230–C232 and C263–C266.

Belongs to the HSP33 family. Under oxidizing conditions two disulfide bonds are formed involving the reactive cysteines. Under reducing conditions zinc is bound to the reactive cysteines and the protein is inactive.

The protein localises to the cytoplasm. Redox regulated molecular chaperone. Protects both thermally unfolding and oxidatively damaged proteins from irreversible aggregation. Plays an important role in the bacterial defense system toward oxidative stress. The sequence is that of 33 kDa chaperonin from Salmonella choleraesuis (strain SC-B67).